The primary structure comprises 79 residues: Large ribosomal subunit protein uL29 (79 aa).

The protein belongs to the universal ribosomal protein uL29 family.

The protein is Large ribosomal subunit protein uL29 of Tropheryma whipplei (strain Twist) (Whipple's bacillus).